The sequence spans 169 residues: Copper-resistant cuproprotein CopI (169 aa).

Residues 1-20 (MIKKTLLVIALTFTVTTAFA) form the signal peptide. 4 residues coordinate Cu(2+): H98, C153, H158, and M163.

It belongs to the CopI family.

The protein localises to the periplasm. Involved in copper tolerance. Mediates copper tolerance in aerobiosis. May also mediate tolerance under anaerobiosis. Not required for virulence or colonization in the mouse model. The sequence is that of Copper-resistant cuproprotein CopI from Vibrio cholerae serotype O1 (strain ATCC 39315 / El Tor Inaba N16961).